Reading from the N-terminus, the 794-residue chain is uncharacterized protein (794 aa).

Positions 1–22 (MKLKYGTIIFSGLLGVSAILAA) are cleaved as a signal peptide. A lipid anchor (N-palmitoyl cysteine) is attached at Cys-23. The S-diacylglycerol cysteine moiety is linked to residue Cys-23. Residues 177–196 (SSGKTQVSQTSSGSNQQKTL) show a composition bias toward polar residues. Disordered regions lie at residues 177–208 (SSGK…SDSS), 220–257 (AKNN…DKKI), and 466–506 (KSTD…ENNS). A compositionally biased stretch (low complexity) spans 220 to 231 (AKNNGKKANNSK). Positions 238–250 (DQSTQTHNDQGDA) are enriched in polar residues.

It belongs to the MG185/MG260 family.

It is found in the cell membrane. This is an uncharacterized protein from Mycoplasma pneumoniae (strain ATCC 29342 / M129 / Subtype 1) (Mycoplasmoides pneumoniae).